The sequence spans 373 residues: MADSSERDAGKSAAAGACAVPKTKGRRVQGRRVVESRYLQYDKKAKKVSGAAKEEKPPEGRKASTVPRSREESQVMGTGNLQSTMLEGHGMNPPDLDLSAIDDKILSRKASWPDREMTDKAKSTSFISCDKKRILRKKRRDLQETMDMMESQTLLMTLLSVKMENNLALLEERAEKDLAAMCHEKERLQRQALELRRQLLLRQKHQELAATLDAQIEVLSPLQPVLERFKEEYMTLGRALDTTRHELPMQAVHMEGSGQELLDDLEPALRITLQLLGDLSICSPYATAQVQGASAQEPGASTQLSCLLKELKGLVTEKDLELRRLVSQVVELSSQASKEAALMNQEVWEEAEGALTSSQWYFSPDACRDDSPS.

3 stretches are compositionally biased toward basic and acidic residues: residues 1-10 (MADSSERDAG), 32-43 (RVVESRYLQYDK), and 52-73 (AKEE…REES). The tract at residues 1–76 (MADSSERDAG…PRSREESQVM (76 aa)) is disordered. N-acetylalanine is present on Ala-2. Ser-99 is subject to Phosphoserine. Residues 130–204 (DKKRILRKKR…LRRQLLLRQK (75 aa)) are a coiled coil.

The protein belongs to the HAUS8 family. Component of the HAUS augmin-like complex. The complex interacts with the gamma-tubulin ring complex and this interaction is required for spindle assembly. Associates with microtubules. The interaction with microtubules is strong during mitosis, while it is weak or absent during interphase. It is unclear whether this interaction is direct or indirect. Interacts with EML3 (phosphorylated at 'Thr-882') and TUBG1.

Its subcellular location is the cytoplasm. The protein resides in the cytoskeleton. It is found in the microtubule organizing center. The protein localises to the centrosome. It localises to the spindle. Its subcellular location is the spindle pole. Functionally, contributes to mitotic spindle assembly, maintenance of centrosome integrity and completion of cytokinesis as part of the HAUS augmin-like complex. The polypeptide is HAUS augmin-like complex subunit 8 (Haus8) (Mus musculus (Mouse)).